A 224-amino-acid chain; its full sequence is 7-cyano-7-deazaguanine synthase (224 aa).

8–18 (LSGGMDSAAVI) is an ATP binding site. Zn(2+) is bound by residues Cys186, Cys196, Cys199, and Cys202.

The protein belongs to the QueC family. It depends on Zn(2+) as a cofactor.

It catalyses the reaction 7-carboxy-7-deazaguanine + NH4(+) + ATP = 7-cyano-7-deazaguanine + ADP + phosphate + H2O + H(+). Its pathway is purine metabolism; 7-cyano-7-deazaguanine biosynthesis. Catalyzes the ATP-dependent conversion of 7-carboxy-7-deazaguanine (CDG) to 7-cyano-7-deazaguanine (preQ(0)). The protein is 7-cyano-7-deazaguanine synthase of Xanthomonas euvesicatoria pv. vesicatoria (strain 85-10) (Xanthomonas campestris pv. vesicatoria).